Here is a 149-residue protein sequence, read N- to C-terminus: Transcriptional repressor NrdR (149 aa).

Residues 3–33 fold into a zinc finger; the sequence is CPFCSSEDTKVVDSRTTIDGSTKRRRECNNC. The region spanning 48–138 is the ATP-cone domain; the sequence is IYVVKKDNRR…VYKEFDDIKS (91 aa).

The protein belongs to the NrdR family. It depends on Zn(2+) as a cofactor.

Negatively regulates transcription of bacterial ribonucleotide reductase nrd genes and operons by binding to NrdR-boxes. In Fusobacterium nucleatum subsp. nucleatum (strain ATCC 25586 / DSM 15643 / BCRC 10681 / CIP 101130 / JCM 8532 / KCTC 2640 / LMG 13131 / VPI 4355), this protein is Transcriptional repressor NrdR.